The primary structure comprises 103 residues: Large ribosomal subunit protein uL24 (103 aa).

The protein belongs to the universal ribosomal protein uL24 family. As to quaternary structure, part of the 50S ribosomal subunit.

Functionally, one of two assembly initiator proteins, it binds directly to the 5'-end of the 23S rRNA, where it nucleates assembly of the 50S subunit. In terms of biological role, one of the proteins that surrounds the polypeptide exit tunnel on the outside of the subunit. The protein is Large ribosomal subunit protein uL24 of Geobacillus sp. (strain WCH70).